Here is a 203-residue protein sequence, read N- to C-terminus: Recombination protein RecR (203 aa).

The C4-type zinc finger occupies 56-71 (CAVCGNVSDDERCRIC). The 101-residue stretch at 79 to 179 (SVVCVVEEPK…TVTRIASGLP (101 aa)) folds into the Toprim domain.

This sequence belongs to the RecR family.

May play a role in DNA repair. It seems to be involved in an RecBC-independent recombinational process of DNA repair. It may act with RecF and RecO. The sequence is that of Recombination protein RecR from Mycobacterium avium (strain 104).